The following is a 574-amino-acid chain: Ankyrin repeat protein B18 (574 aa).

ANK repeat units lie at residues 56 to 87 (TGYTALHCYLYNNYFTNDVLKILLNHDVNVTM), 135 to 164 (IKSRYMLLKEEDIDENIVSTLLDKGIDPNF), 167 to 213 (DGYT…NLNA), 217 to 249 (CGNTPFHLYLSIEMCNNIHMTKMLLTFNPNFKI), 253 to 285 (HGLTPILCYITSDYIQHDILVMLIHHYETNVGE), and 327 to 356 (EGKTLLHVACEYNNTQVIDYLIRINGDINA). The region spanning 541–574 (NCLLTLLPSEIIYEILYMLTINDLYNISYPPTKV) is the F-box domain.

The sequence is that of Ankyrin repeat protein B18 from Homo sapiens (Human).